A 103-amino-acid polypeptide reads, in one-letter code: Small ribosomal subunit protein uS10 (103 aa).

This sequence belongs to the universal ribosomal protein uS10 family. As to quaternary structure, part of the 30S ribosomal subunit.

Involved in the binding of tRNA to the ribosomes. The polypeptide is Small ribosomal subunit protein uS10 (Thioalkalivibrio sulfidiphilus (strain HL-EbGR7)).